The primary structure comprises 673 residues: uncharacterized protein (673 aa).

The first 24 residues, 1-24 (MKIHNIIKIIIVVCLEGFALTSFA), serve as a signal peptide directing secretion. Helical transmembrane passes span 224–244 (NAIG…MVLN), 253–273 (IALF…LGPL), 410–430 (IILI…LYFI), 436–456 (CMIT…MMLF), 469–489 (VSLS…LLIT), and 562–582 (VVSI…FYYF). The tract at residues 624–673 (AQATQGKPPSSGDMPGDGGSKRSEGQKGDDSFISSGGNSSGDSLSSSGGK) is disordered. Positions 642–653 (GSKRSEGQKGDD) are enriched in basic and acidic residues. A compositionally biased stretch (low complexity) spans 654–673 (SFISSGGNSSGDSLSSSGGK).

The protein belongs to the TrbL/VirB6 family.

The protein localises to the cell membrane. This is an uncharacterized protein from Rickettsia bellii (strain RML369-C).